Consider the following 492-residue polypeptide: 2,3-bisphosphoglycerate-independent phosphoglycerate mutase (492 aa).

Positions 11 and 61 each coordinate Mn(2+). Serine 61 acts as the Phosphoserine intermediate in catalysis. Residues histidine 118, arginine 147–aspartate 148, arginine 178, arginine 184, arginine 248–arginine 251, and lysine 320 each bind substrate. 5 residues coordinate Mn(2+): aspartate 386, histidine 390, aspartate 427, histidine 428, and histidine 445.

The protein belongs to the BPG-independent phosphoglycerate mutase family. In terms of assembly, monomer. Mn(2+) serves as cofactor.

It carries out the reaction (2R)-2-phosphoglycerate = (2R)-3-phosphoglycerate. The protein operates within carbohydrate degradation; glycolysis; pyruvate from D-glyceraldehyde 3-phosphate: step 3/5. Catalyzes the interconversion of 2-phosphoglycerate and 3-phosphoglycerate. The chain is 2,3-bisphosphoglycerate-independent phosphoglycerate mutase from Campylobacter jejuni (strain RM1221).